Consider the following 139-residue polypeptide: Putative pre-16S rRNA nuclease (139 aa).

Belongs to the YqgF nuclease family.

The protein resides in the cytoplasm. Could be a nuclease involved in processing of the 5'-end of pre-16S rRNA. The sequence is that of Putative pre-16S rRNA nuclease from Legionella pneumophila subsp. pneumophila (strain Philadelphia 1 / ATCC 33152 / DSM 7513).